Here is a 561-residue protein sequence, read N- to C-terminus: Acyl-CoA ligase ppsA (561 aa).

Asn21 carries an N-linked (GlcNAc...) asparagine glycan. Residues 71–91 (SILYPALFLAIVGVGAVYMGA) traverse the membrane as a helical segment. Position 203-214 (203-214 (MFATSGTSGLPK)) interacts with AMP. An N-linked (GlcNAc...) asparagine glycan is attached at Asn396. Positions 462-540 (ELEAELAQHP…DSIPRNSGGK (79 aa)) are AMP-binding.

This sequence belongs to the ATP-dependent AMP-binding enzyme family.

The protein resides in the membrane. It catalyses the reaction acetate + ATP + CoA = acetyl-CoA + ADP + phosphate. The catalysed reaction is propanoate + ATP + CoA = propanoyl-CoA + AMP + diphosphate. It participates in secondary metabolite biosynthesis. Acyl-CoA ligase; part of the gene cluster that mediates the biosynthesis of 2,4'-dihydroxy-3'-methoxypropiophenone. The first step of the pathway is the conversion of acetate into acetyl-CoA by the acyl-CoA ligase ppsA. Acetyl-CoA is then used as a starter unit by the polyketide synthase ppsB and condensed with 4 malonyl-CoA unit to produce the pentaketide backbone. During polyketide extension, the polykedite chain is probably reduced and dehydrated by the KR and PT domains, respectively. O-methylation seems to be catalyzed by an unknown methyltransferase rather than by the CMeT domain of ppsB. Two hydroxylations and one further decarboxylation step catalyzed by yet unknown enzymes are then required to yield 4'-hydroxy-3'-methoxypropiophenone. PpsC functions as a carrier protein to transport 4'-hydroxy-3'-methoxypropiophenone to a specific cell compartment in which 4'-hydroxy-3'-methoxypropiophenone is hydroxylated to 2,4'-dihydroxy-3'-methoxypropiophenone by a still to be identified enzyme. The sequence is that of Acyl-CoA ligase ppsA from Aspergillus oryzae (strain ATCC 42149 / RIB 40) (Yellow koji mold).